We begin with the raw amino-acid sequence, 293 residues long: Formamidopyrimidine-DNA glycosylase (293 aa).

Catalysis depends on proline 2, which acts as the Schiff-base intermediate with DNA. Glutamate 3 functions as the Proton donor in the catalytic mechanism. Catalysis depends on lysine 60, which acts as the Proton donor; for beta-elimination activity. Residues histidine 110, arginine 129, and arginine 174 each contribute to the DNA site. The segment at 259–293 (NVYRRTGKECRKCGNLIERKKISGRSTHWCPKCQK) adopts an FPG-type zinc-finger fold. Residue arginine 283 is the Proton donor; for delta-elimination activity of the active site.

The protein belongs to the FPG family. In terms of assembly, monomer. Zn(2+) serves as cofactor.

It catalyses the reaction Hydrolysis of DNA containing ring-opened 7-methylguanine residues, releasing 2,6-diamino-4-hydroxy-5-(N-methyl)formamidopyrimidine.. It carries out the reaction 2'-deoxyribonucleotide-(2'-deoxyribose 5'-phosphate)-2'-deoxyribonucleotide-DNA = a 3'-end 2'-deoxyribonucleotide-(2,3-dehydro-2,3-deoxyribose 5'-phosphate)-DNA + a 5'-end 5'-phospho-2'-deoxyribonucleoside-DNA + H(+). Involved in base excision repair of DNA damaged by oxidation or by mutagenic agents. Acts as a DNA glycosylase that recognizes and removes damaged bases. Has a preference for oxidized purines, such as 7,8-dihydro-8-oxoguanine (8-oxoG). Has AP (apurinic/apyrimidinic) lyase activity and introduces nicks in the DNA strand. Cleaves the DNA backbone by beta-delta elimination to generate a single-strand break at the site of the removed base with both 3'- and 5'-phosphates. This chain is Formamidopyrimidine-DNA glycosylase, found in Prochlorococcus marinus (strain MIT 9215).